The following is a 226-amino-acid chain: Leucyl/phenylalanyl-tRNA--protein transferase (226 aa).

The protein belongs to the L/F-transferase family.

It localises to the cytoplasm. The enzyme catalyses N-terminal L-lysyl-[protein] + L-leucyl-tRNA(Leu) = N-terminal L-leucyl-L-lysyl-[protein] + tRNA(Leu) + H(+). It carries out the reaction N-terminal L-arginyl-[protein] + L-leucyl-tRNA(Leu) = N-terminal L-leucyl-L-arginyl-[protein] + tRNA(Leu) + H(+). It catalyses the reaction L-phenylalanyl-tRNA(Phe) + an N-terminal L-alpha-aminoacyl-[protein] = an N-terminal L-phenylalanyl-L-alpha-aminoacyl-[protein] + tRNA(Phe). Its function is as follows. Functions in the N-end rule pathway of protein degradation where it conjugates Leu, Phe and, less efficiently, Met from aminoacyl-tRNAs to the N-termini of proteins containing an N-terminal arginine or lysine. The protein is Leucyl/phenylalanyl-tRNA--protein transferase of Pseudomonas paraeruginosa (strain DSM 24068 / PA7) (Pseudomonas aeruginosa (strain PA7)).